Consider the following 268-residue polypeptide: Bis(5'-nucleosyl)-tetraphosphatase, symmetrical (268 aa).

It belongs to the Ap4A hydrolase family.

It carries out the reaction P(1),P(4)-bis(5'-adenosyl) tetraphosphate + H2O = 2 ADP + 2 H(+). Its function is as follows. Hydrolyzes diadenosine 5',5'''-P1,P4-tetraphosphate to yield ADP. The sequence is that of Bis(5'-nucleosyl)-tetraphosphatase, symmetrical from Vibrio campbellii (strain ATCC BAA-1116).